We begin with the raw amino-acid sequence, 283 residues long: Elongation factor Ts (283 aa).

The interval Thr-84–Val-87 is involved in Mg(2+) ion dislocation from EF-Tu.

This sequence belongs to the EF-Ts family.

It is found in the cytoplasm. Associates with the EF-Tu.GDP complex and induces the exchange of GDP to GTP. It remains bound to the aminoacyl-tRNA.EF-Tu.GTP complex up to the GTP hydrolysis stage on the ribosome. The protein is Elongation factor Ts of Bifidobacterium longum (strain DJO10A).